We begin with the raw amino-acid sequence, 4388 residues long: Intermembrane lipid transfer protein VPS13D (4388 aa).

Residues 2-115 form the Chorein N-terminal domain; sequence LEGLVAWVLN…ERERKKALLQ (114 aa). Ser663 carries the post-translational modification Phosphoserine. Residues 745–796 are disordered; sequence QDNSRRKSRDGSASEETQFSDDEYKTPLATPPNTPPPESSSSNGEKTPPFSG. The span at 747-756 shows a compositional bias: basic and acidic residues; that stretch reads NSRRKSRDGS. A compositionally biased stretch (pro residues) spans 773-782; that stretch reads ATPPNTPPPE. Phosphoserine is present on residues Ser1034, Ser1038, Ser1042, Ser1138, and Ser1341. Positions 1563–1582 are disordered; it reads ASATSSPCPDSPLPPLSTCG. Ser1598, Ser1603, and Ser1699 each carry phosphoserine. Disordered regions lie at residues 1741–1771, 2070–2108, and 2122–2145; these read RPTSASRKKQKEVQDKDYPLTPPPSPTVDEP, QDKESVPSASPTGIPKHSLRKTTSTEEPRGTHSQGQFTM, and FVPSTSTKQQGPQPTLSVGQESSS. Thr1761 is modified (phosphothreonine). Ser1765 is modified (phosphoserine). Residues 2123–2144 are compositionally biased toward polar residues; that stretch reads VPSTSTKQQGPQPTLSVGQESS. 5 positions are modified to phosphoserine: Ser2435, Ser2671, Ser2861, Ser2864, and Ser2983. The region spanning 2633–2676 is the UBA domain; that stretch reads TLDPVLELQLARLQELGFSMDDCRKALLACQGQLKKAASWLFKN. The 283-residue stretch at 3276 to 3558 folds into the SHR-BD domain; it reads LKIFISAPYW…LDYAWDEPTL (283 aa). Position 3524 is an N6-acetyllysine (Lys3524).

Belongs to the VPS13 family. In terms of tissue distribution, widely expressed.

Mediates the transfer of lipids between membranes at organelle contact sites. Functions in promoting mitochondrial clearance by mitochondrial autophagy (mitophagy), also possibly by positively regulating mitochondrial fission. Mitophagy plays an important role in regulating cell health and mitochondrial size and homeostasis. The chain is Intermembrane lipid transfer protein VPS13D from Homo sapiens (Human).